Consider the following 203-residue polypeptide: Glycerol-3-phosphate acyltransferase (203 aa).

5 helical membrane passes run 4-24, 56-76, 80-100, 115-135, and 149-169; these read IAYL…AVIF, LGVL…GFYL, ISVI…PVFF, IIPM…FVFL, and LIVP…VALV.

It belongs to the PlsY family. As to quaternary structure, probably interacts with PlsX.

The protein localises to the cell inner membrane. The catalysed reaction is an acyl phosphate + sn-glycerol 3-phosphate = a 1-acyl-sn-glycero-3-phosphate + phosphate. It participates in lipid metabolism; phospholipid metabolism. Functionally, catalyzes the transfer of an acyl group from acyl-phosphate (acyl-PO(4)) to glycerol-3-phosphate (G3P) to form lysophosphatidic acid (LPA). This enzyme utilizes acyl-phosphate as fatty acyl donor, but not acyl-CoA or acyl-ACP. The polypeptide is Glycerol-3-phosphate acyltransferase (Glaesserella parasuis serovar 5 (strain SH0165) (Haemophilus parasuis)).